Reading from the N-terminus, the 530-residue chain is Lanosterol 14-alpha demethylase CYP51 (530 aa).

At 1–20 the chain is on the lumenal side; it reads MSATKSIVGEALEYVNIGLS. A helical transmembrane segment spans residues 21–41; it reads HFLALPLAQRISLIIIIPFIY. The Cytoplasmic segment spans residues 42 to 530; sequence NIVWQLLYSL…WEKRNPEQKI (489 aa). Residue lysine 116 forms a Glycyl lysine isopeptide (Lys-Gly) (interchain with G-Cter in ubiquitin) linkage. Position 126 (tyrosine 126) interacts with lanosterol. Position 314 (glycine 314) interacts with itraconazole. Residues lysine 353 and lysine 454 each participate in a glycyl lysine isopeptide (Lys-Gly) (interchain with G-Cter in ubiquitin) cross-link. Serine 458 carries the post-translational modification Phosphoserine. Cysteine 470 is a binding site for heme.

It belongs to the cytochrome P450 family. Interacts with ERG28. Requires heme as cofactor.

The protein resides in the endoplasmic reticulum membrane. It catalyses the reaction a 14alpha-methyl steroid + 3 reduced [NADPH--hemoprotein reductase] + 3 O2 = a Delta(14) steroid + formate + 3 oxidized [NADPH--hemoprotein reductase] + 4 H2O + 4 H(+). The catalysed reaction is a 14alpha-methyl steroid + reduced [NADPH--hemoprotein reductase] + O2 = a 14alpha-hydroxymethyl steroid + oxidized [NADPH--hemoprotein reductase] + H2O + H(+). The enzyme catalyses a 14alpha-hydroxymethyl steroid + reduced [NADPH--hemoprotein reductase] + O2 = a 14alpha-formyl steroid + oxidized [NADPH--hemoprotein reductase] + 2 H2O + H(+). It carries out the reaction a 14alpha-formyl steroid + reduced [NADPH--hemoprotein reductase] + O2 = a Delta(14) steroid + formate + oxidized [NADPH--hemoprotein reductase] + H2O + 2 H(+). It catalyses the reaction lanosterol + 3 reduced [NADPH--hemoprotein reductase] + 3 O2 = 4,4-dimethyl-5alpha-cholesta-8,14,24-trien-3beta-ol + formate + 3 oxidized [NADPH--hemoprotein reductase] + 4 H2O + 4 H(+). The catalysed reaction is lanosterol + reduced [NADPH--hemoprotein reductase] + O2 = 32-hydroxylanosterol + oxidized [NADPH--hemoprotein reductase] + H2O + H(+). The enzyme catalyses 32-hydroxylanosterol + reduced [NADPH--hemoprotein reductase] + O2 = 32-oxolanosterol + oxidized [NADPH--hemoprotein reductase] + 2 H2O + H(+). It carries out the reaction 32-oxolanosterol + reduced [NADPH--hemoprotein reductase] + O2 = 4,4-dimethyl-5alpha-cholesta-8,14,24-trien-3beta-ol + formate + oxidized [NADPH--hemoprotein reductase] + H2O + 2 H(+). It functions in the pathway steroid biosynthesis; zymosterol biosynthesis; zymosterol from lanosterol: step 1/6. Its function is as follows. Sterol 14alpha-demethylase that plays a critical role in the third module of ergosterol biosynthesis pathway, being ergosterol the major sterol component in fungal membranes that participates in a variety of functions. The third module or late pathway involves the ergosterol synthesis itself through consecutive reactions that mainly occur in the endoplasmic reticulum (ER) membrane. Starting from lanosterol (lanosta-8,24-dien-3beta-ol), it catalyzes the three-step oxidative removal of the 14alpha-methyl group (C-32) of the sterol in the form of formate, and converts the sterol to 4,4-dimethyl-5alpha-cholesta-8,14,24-trien-3beta-ol, which is critical for ergosterol biosynthesis. Can demethylate substrates not intrinsic to yeast, such as eburicol (24-methylene-24,25-dihydrolanosterol) at a similar rate to lanosterol, and at a lower rate the 24,25-dihydrolanosterol (DHL) to 4,4-dimethyl-8,14-cholestadien-3beta-ol. In Saccharomyces cerevisiae (strain ATCC 204508 / S288c) (Baker's yeast), this protein is Lanosterol 14-alpha demethylase CYP51.